The chain runs to 554 residues: Glucose-6-phosphate isomerase (554 aa).

The Proton donor role is filled by Glu358. Active-site residues include His389 and Lys515.

The protein belongs to the GPI family.

The protein localises to the cytoplasm. It catalyses the reaction alpha-D-glucose 6-phosphate = beta-D-fructose 6-phosphate. The protein operates within carbohydrate biosynthesis; gluconeogenesis. Its pathway is carbohydrate degradation; glycolysis; D-glyceraldehyde 3-phosphate and glycerone phosphate from D-glucose: step 2/4. Functionally, catalyzes the reversible isomerization of glucose-6-phosphate to fructose-6-phosphate. This Mycobacterium leprae (strain Br4923) protein is Glucose-6-phosphate isomerase.